The sequence spans 190 residues: MATENKNLSEYDKNTIPNAKDFRFGIVVSEWNDVITEGLYNGAFEALIDCDVPAQQIIRWNVPGSFELIYGAKKMLQTQNVDAVIVIGCVIQGETKHFDFVCEGVTQGIKDLNVQTDIPVIFCVLTDNNMQQSIDRSGGVHGNKGTEAAIAAIKMAYIRQQASISHPFNQPLLSSGALQIEETPIKIEKE.

5-amino-6-(D-ribitylamino)uracil is bound by residues tryptophan 31, 65 to 67 (SFE), and 89 to 91 (CVI). (2S)-2-hydroxy-3-oxobutyl phosphate is bound at residue 94 to 95 (ET). Residue histidine 97 is the Proton donor of the active site. Phenylalanine 122 contacts 5-amino-6-(D-ribitylamino)uracil. Arginine 136 is a (2S)-2-hydroxy-3-oxobutyl phosphate binding site.

Belongs to the DMRL synthase family.

The catalysed reaction is (2S)-2-hydroxy-3-oxobutyl phosphate + 5-amino-6-(D-ribitylamino)uracil = 6,7-dimethyl-8-(1-D-ribityl)lumazine + phosphate + 2 H2O + H(+). It functions in the pathway cofactor biosynthesis; riboflavin biosynthesis; riboflavin from 2-hydroxy-3-oxobutyl phosphate and 5-amino-6-(D-ribitylamino)uracil: step 1/2. In terms of biological role, catalyzes the formation of 6,7-dimethyl-8-ribityllumazine by condensation of 5-amino-6-(D-ribitylamino)uracil with 3,4-dihydroxy-2-butanone 4-phosphate. This is the penultimate step in the biosynthesis of riboflavin. The chain is 6,7-dimethyl-8-ribityllumazine synthase from Flavobacterium johnsoniae (strain ATCC 17061 / DSM 2064 / JCM 8514 / BCRC 14874 / CCUG 350202 / NBRC 14942 / NCIMB 11054 / UW101) (Cytophaga johnsonae).